A 115-amino-acid polypeptide reads, in one-letter code: MKVLVLFSVLFLTLFSYSSTEAIDEFDSDAEDDMLSLMANEQVRAKACTPRLHDCSHDRHSCCRSELFKDVCTCFYPEGGDNEVCTCQQPKHLKYMEKAADKAKKFGGKIKKWFG.

An N-terminal signal peptide occupies residues 1 to 22 (MKVLVLFSVLFLTLFSYSSTEA). Positions 23–44 (IDEFDSDAEDDMLSLMANEQVR) are excised as a propeptide. 4 cysteine pairs are disulfide-bonded: Cys48–Cys63, Cys55–Cys72, Cys62–Cys87, and Cys74–Cys85.

Belongs to the neurotoxin 19 (CSTX) family. 01 subfamily. Expressed by the venom gland.

The protein resides in the secreted. The sequence is that of Toxin-like structure LSTX-D2 from Lycosa singoriensis (Wolf spider).